A 156-amino-acid chain; its full sequence is ATP synthase subunit b (156 aa).

A helical transmembrane segment spans residues F7–P27.

It belongs to the ATPase B chain family. In terms of assembly, F-type ATPases have 2 components, F(1) - the catalytic core - and F(0) - the membrane proton channel. F(1) has five subunits: alpha(3), beta(3), gamma(1), delta(1), epsilon(1). F(0) has three main subunits: a(1), b(2) and c(10-14). The alpha and beta chains form an alternating ring which encloses part of the gamma chain. F(1) is attached to F(0) by a central stalk formed by the gamma and epsilon chains, while a peripheral stalk is formed by the delta and b chains.

It is found in the cell inner membrane. Functionally, f(1)F(0) ATP synthase produces ATP from ADP in the presence of a proton or sodium gradient. F-type ATPases consist of two structural domains, F(1) containing the extramembraneous catalytic core and F(0) containing the membrane proton channel, linked together by a central stalk and a peripheral stalk. During catalysis, ATP synthesis in the catalytic domain of F(1) is coupled via a rotary mechanism of the central stalk subunits to proton translocation. Component of the F(0) channel, it forms part of the peripheral stalk, linking F(1) to F(0). This Cupriavidus necator (strain ATCC 17699 / DSM 428 / KCTC 22496 / NCIMB 10442 / H16 / Stanier 337) (Ralstonia eutropha) protein is ATP synthase subunit b.